The primary structure comprises 481 residues: 1-acylglycerol-3-phosphate O-acyltransferase PNPLA3 (481 aa).

The Cytoplasmic portion of the chain corresponds to 1 to 41 (MYDAERGWSLSFAGCGFLGFYHVGATRCLSEHAPHLLRDAR). The PNPLA domain occupies 10–179 (LSFAGCGFLG…SDNVPFIDAK (170 aa)). The GXGXXG motif lies at 14–19 (GCGFLG). The helical; Signal-anchor for type II membrane protein transmembrane segment at 42-62 (MLFGASAGALHCVGVLSGIPL) threads the bilayer. Residues 45–49 (GASAG) carry the GXSXG motif. Ser47 functions as the Nucleophile in the catalytic mechanism. The Lumenal portion of the chain corresponds to 63-481 (EQTLQVLSDL…FPSFSLEKSL (419 aa)). The N-linked (GlcNAc...) asparagine glycan is linked to Asn89. The active-site Proton acceptor is Asp166. The DGA/G motif lies at 166-168 (DGG). The N-linked (GlcNAc...) asparagine glycan is linked to Asn280.

It is found in the membrane. The protein resides in the lipid droplet. It catalyses the reaction a 1-acyl-sn-glycero-3-phosphate + an acyl-CoA = a 1,2-diacyl-sn-glycero-3-phosphate + CoA. The enzyme catalyses a triacylglycerol + H2O = a diacylglycerol + a fatty acid + H(+). The catalysed reaction is a 1-acylglycerol + a 1,3-diacylglycerol = a triacylglycerol + glycerol. It carries out the reaction a 1-acylglycerol + a 1,2-diacylglycerol = a triacylglycerol + glycerol. It catalyses the reaction 2 a 1-acylglycerol = a 1,2-diacylglycerol + glycerol. The enzyme catalyses 1-(9Z-octadecenoyl)-sn-glycero-3-phosphate + (9Z)-octadecenoyl-CoA = 1,2-di-(9Z-octadecenoyl)-sn-glycero-3-phosphate + CoA. The catalysed reaction is 1-(9Z-octadecenoyl)-sn-glycero-3-phosphate + hexadecanoyl-CoA = 1-(9Z)-octadecenoyl-2-hexadecanoyl-sn-glycero-3-phosphate + CoA. It carries out the reaction 1-(9Z-octadecenoyl)-sn-glycero-3-phosphate + (9Z,12Z)-octadecadienoyl-CoA = 1-(9Z)-octadecenoyl-2-(9Z,12Z)-octadecadienoyl-sn-glycero-3-phosphate + CoA. It catalyses the reaction 1-(9Z-octadecenoyl)-sn-glycero-3-phosphate + (5Z,8Z,11Z,14Z)-eicosatetraenoyl-CoA = 1-(9Z)-octadecenoyl-2-(5Z,8Z,11Z,14Z)-eicosatetraenoyl-sn-glycero-3-phosphate + CoA. The enzyme catalyses 2 1-(9Z-octadecenoyl)-glycerol = 1,2-di-(9Z-octadecenoyl)-glycerol + glycerol. The catalysed reaction is 1-(9Z-octadecenoyl)-glycerol + 1,2-di-(9Z-octadecenoyl)-glycerol = 1,2,3-tri-(9Z-octadecenoyl)-glycerol + glycerol. It carries out the reaction 1-(9Z-octadecenoyl)-glycerol + 1,3-di-(9Z-octadecenoyl)-glycerol = 1,2,3-tri-(9Z-octadecenoyl)-glycerol + glycerol. It catalyses the reaction 1,2,3-tri-(9Z-octadecenoyl)-glycerol + H2O = 1,3-di-(9Z-octadecenoyl)-glycerol + (9Z)-octadecenoate + H(+). The enzyme catalyses a 1,2-diacyl-sn-glycero-3-phosphocholine + H2O = a 1-acyl-sn-glycero-3-phosphocholine + a fatty acid + H(+). It functions in the pathway phospholipid metabolism. It participates in glycerolipid metabolism. The triglyceride lipase activity is inhibited by BEL ((E)-6-(bromomethylene)-3-(1-naphthalenyl)-2H-tetrahydropyran-2-one), a suicide substrate inhibitor. Functionally, specifically catalyzes coenzyme A (CoA)-dependent acylation of 1-acyl-sn-glycerol 3-phosphate (2-lysophosphatidic acid/LPA) to generate phosphatidic acid (PA), an important metabolic intermediate and precursor for both triglycerides and glycerophospholipids. Does not esterify other lysophospholipids. Acyl donors are long chain (at least C16) fatty acyl-CoAs: arachidonoyl-CoA, linoleoyl-CoA, oleoyl-CoA and at a lesser extent palmitoyl-CoA. Additionally possesses low triacylglycerol lipase and CoA-independent acylglycerol transacylase activities and thus may play a role in acyl-chain remodeling of triglycerides. In vitro may express hydrolytic activity against glycerolipids triacylglycerol, diacylglycerol and monoacylglycerol, with a strong preference for oleic acid as the acyl moiety. However, the triacylglycerol hydrolase activity is controversial and may be very low. Possesses phospholipase A2 activity. The protein is 1-acylglycerol-3-phosphate O-acyltransferase PNPLA3 of Homo sapiens (Human).